A 484-amino-acid polypeptide reads, in one-letter code: tRNA sulfurtransferase (484 aa).

Residues Gln-63–Arg-167 enclose the THUMP domain. ATP-binding positions include Leu-185–Ile-186, Lys-267, Gly-289, and Gln-298. Cys-346 and Cys-458 are oxidised to a cystine. Residues Ile-406–Pro-484 enclose the Rhodanese domain. Residue Cys-458 is the Cysteine persulfide intermediate of the active site.

The protein belongs to the ThiI family.

It is found in the cytoplasm. The catalysed reaction is [ThiI sulfur-carrier protein]-S-sulfanyl-L-cysteine + a uridine in tRNA + 2 reduced [2Fe-2S]-[ferredoxin] + ATP + H(+) = [ThiI sulfur-carrier protein]-L-cysteine + a 4-thiouridine in tRNA + 2 oxidized [2Fe-2S]-[ferredoxin] + AMP + diphosphate. It catalyses the reaction [ThiS sulfur-carrier protein]-C-terminal Gly-Gly-AMP + S-sulfanyl-L-cysteinyl-[cysteine desulfurase] + AH2 = [ThiS sulfur-carrier protein]-C-terminal-Gly-aminoethanethioate + L-cysteinyl-[cysteine desulfurase] + A + AMP + 2 H(+). Its pathway is cofactor biosynthesis; thiamine diphosphate biosynthesis. Functionally, catalyzes the ATP-dependent transfer of a sulfur to tRNA to produce 4-thiouridine in position 8 of tRNAs, which functions as a near-UV photosensor. Also catalyzes the transfer of sulfur to the sulfur carrier protein ThiS, forming ThiS-thiocarboxylate. This is a step in the synthesis of thiazole, in the thiamine biosynthesis pathway. The sulfur is donated as persulfide by IscS. The protein is tRNA sulfurtransferase of Shewanella sp. (strain MR-7).